We begin with the raw amino-acid sequence, 47 residues long: Photosystem II reaction center protein Psb30 (47 aa).

Residues 19–39 (VIFQLLSVALIVIAGPVVIFL) traverse the membrane as a helical segment.

The protein belongs to the Psb30/Ycf12 family. In terms of assembly, PSII is composed of 1 copy each of membrane proteins PsbA, PsbB, PsbC, PsbD, PsbE, PsbF, PsbH, PsbI, PsbJ, PsbK, PsbL, PsbM, PsbT, PsbX, PsbY, PsbZ, Psb30/Ycf12, peripheral proteins PsbO, CyanoQ (PsbQ), PsbU, PsbV and a large number of cofactors. It forms dimeric complexes.

The protein resides in the cellular thylakoid membrane. In terms of biological role, a core subunit of photosystem II (PSII), probably helps stabilize the reaction center. This is Photosystem II reaction center protein Psb30 from Nostoc punctiforme (strain ATCC 29133 / PCC 73102).